The primary structure comprises 1321 residues: Serine/threonine-protein kinase SIK3 (1321 aa).

Positions 1 to 59 are disordered; it reads MAAAAASGAGGAAGAGTGGAGPAGRLLPPPAPGSPAAPAAVSPAAGQPRPPAPASRGPM. The segment covering 8-22 has biased composition (gly residues); sequence GAGGAAGAGTGGAGP. Low complexity predominate over residues 36-47; that stretch reads AAPAAVSPAAGQ. Positions 66 to 317 constitute a Protein kinase domain; sequence YEIDRTIGKG…MEQICKHKWM (252 aa). Residue T71 is modified to Phosphothreonine. ATP contacts are provided by residues 72–80 and K95; that span reads IGKGNFAVV. The residue at position 113 (E113) is a Phosphothreonine. D188 serves as the catalytic Proton acceptor. T221 carries the post-translational modification Phosphothreonine; by LKB1. The UBA domain maps to 344-384; it reads PLNEDVLLAMEDMGLDKEQTLQSLRSDAYDHYSAIYSLLCD. T469 is subject to Phosphothreonine. 3 positions are modified to phosphoserine: S551, S591, and S592. Positions 585 to 614 are disordered; that stretch reads TPVDEESSDGEPDQEAVQSSTYKDSNTLHL. Residues 587–598 are compositionally biased toward acidic residues; it reads VDEESSDGEPDQ. Positions 600-613 are enriched in polar residues; the sequence is AVQSSTYKDSNTLH. S626 and S647 each carry phosphoserine. Residues 727–772 are disordered; sequence IQPSSPPPNHPNNHLFRQPSNSPPPMSSAMIQPHGAASSSQFQGLP. Residues 763-772 are compositionally biased toward polar residues; that stretch reads ASSSQFQGLP. S866 is modified (phosphoserine). The tract at residues 894–945 is disordered; that stretch reads LFSDQSRGSPSSYSPSTGVGFSPTQALKVPPLDQFPTFPPSAHQQPPHYTTS. Low complexity predominate over residues 896 to 909; the sequence is SDQSRGSPSSYSPS. Positions 935–945 are enriched in polar residues; that stretch reads AHQQPPHYTTS. Phosphoserine is present on S978. R986 is modified (omega-N-methylarginine). The segment covering 1256 to 1265 has biased composition (polar residues); that stretch reads SLMGSQQFQD. A disordered region spans residues 1256-1289; that stretch reads SLMGSQQFQDGENEECGASLGGHEHPDLSDGSQH.

Belongs to the protein kinase superfamily. CAMK Ser/Thr protein kinase family. SNF1 subfamily. Binds to and is activated by YWHAZ when phosphorylated on Thr-221. Interacts with 14-3-3 proteins. Interacts with HDAC4; this interaction leads to HDAC4 retention in the cytoplasm. Interacts with DEPTOR, MLST8/GbetaL, RICTOR and RPTOR. Mg(2+) is required as a cofactor. Post-translationally, phosphorylated at Thr-221 by STK11/LKB1 in complex with STE20-related adapter-alpha (STRADA) pseudo kinase and CAB39. Phosphorylation at Thr-221 is inhibited in response to PTHLH/PTHrP. Phosphorylated at Thr-469 and Ser-551 in response to cAMP signaling. Expressed in chondrocytes.

The protein resides in the cytoplasm. The catalysed reaction is L-seryl-[protein] + ATP = O-phospho-L-seryl-[protein] + ADP + H(+). It carries out the reaction L-threonyl-[protein] + ATP = O-phospho-L-threonyl-[protein] + ADP + H(+). Activated by phosphorylation on Thr-221. Its function is as follows. Positive regulator of mTOR signaling that functions by triggering the degradation of DEPTOR, an mTOR inhibitor. Involved in the dynamic regulation of mTOR signaling in chondrocyte differentiation during skeletogenesis. Negatively regulates cAMP signaling pathway possibly by acting on CRTC2/TORC2 and CRTC3/TORC3. Prevents HDAC4 translocation to the nucleus. The chain is Serine/threonine-protein kinase SIK3 from Homo sapiens (Human).